Reading from the N-terminus, the 243-residue chain is 1-(5-phosphoribosyl)-5-[(5-phosphoribosylamino)methylideneamino] imidazole-4-carboxamide isomerase (243 aa).

Residue Asp8 is the Proton acceptor of the active site. Catalysis depends on Asp130, which acts as the Proton donor.

Belongs to the HisA/HisF family.

It is found in the cytoplasm. It catalyses the reaction 1-(5-phospho-beta-D-ribosyl)-5-[(5-phospho-beta-D-ribosylamino)methylideneamino]imidazole-4-carboxamide = 5-[(5-phospho-1-deoxy-D-ribulos-1-ylimino)methylamino]-1-(5-phospho-beta-D-ribosyl)imidazole-4-carboxamide. It participates in amino-acid biosynthesis; L-histidine biosynthesis; L-histidine from 5-phospho-alpha-D-ribose 1-diphosphate: step 4/9. This chain is 1-(5-phosphoribosyl)-5-[(5-phosphoribosylamino)methylideneamino] imidazole-4-carboxamide isomerase, found in Saccharophagus degradans (strain 2-40 / ATCC 43961 / DSM 17024).